The chain runs to 222 residues: uncharacterized protein (222 aa).

Residues 1–27 (MSFTRRKFVLGMGTVIFFTGSASSLLA) constitute a signal peptide (tat-type signal). 3 4Fe-4S ferredoxin-type domains span residues 37-67 (YAMI…AQGS), 83-114 (TQYH…RDEQ), and 115-144 (GIVR…LNPV). Positions 46, 49, 52, 56, 92, 95, 100, 104, 124, 127, 130, 134, 151, 154, 167, and 171 each coordinate [4Fe-4S] cluster.

Post-translationally, exported by the Tat system. The position of the signal peptide cleavage has not been experimentally proven. Can also be exported by the Sec system.

This is an uncharacterized protein from Escherichia coli (strain K12).